We begin with the raw amino-acid sequence, 440 residues long: Chromosomal replication initiator protein DnaA (440 aa).

A domain I, interacts with DnaA modulators region spans residues 1 to 72; sequence MTELDSLWEA…KEFAQRELGR (72 aa). The segment at 72-103 is domain II; sequence RNIEPHYVLEGEFTYTNKKTEDDPTPSFEMDT. Positions 104–320 are domain III, AAA+ region; that stretch reads PLNPHYNFGT…GALTKVQAFA (217 aa). 4 residues coordinate ATP: Gly148, Gly150, Lys151, and Thr152. The interval 321–440 is domain IV, binds dsDNA; sequence NLSGERITPS…ITKLKAKLRS (120 aa).

This sequence belongs to the DnaA family. In terms of assembly, oligomerizes as a right-handed, spiral filament on DNA at oriC.

It localises to the cytoplasm. Its function is as follows. Plays an essential role in the initiation and regulation of chromosomal replication. ATP-DnaA binds to the origin of replication (oriC) to initiate formation of the DNA replication initiation complex once per cell cycle. Binds the DnaA box (a 9 base pair repeat at the origin) and separates the double-stranded (ds)DNA. Forms a right-handed helical filament on oriC DNA; dsDNA binds to the exterior of the filament while single-stranded (ss)DNA is stabiized in the filament's interior. The ATP-DnaA-oriC complex binds and stabilizes one strand of the AT-rich DNA unwinding element (DUE), permitting loading of DNA polymerase. After initiation quickly degrades to an ADP-DnaA complex that is not apt for DNA replication. Binds acidic phospholipids. The sequence is that of Chromosomal replication initiator protein DnaA from Limosilactobacillus reuteri (strain DSM 20016) (Lactobacillus reuteri).